The following is a 285-amino-acid chain: 2,3,4,5-tetrahydropyridine-2,6-dicarboxylate N-succinyltransferase (285 aa).

Arginine 111 and aspartate 148 together coordinate substrate.

This sequence belongs to the transferase hexapeptide repeat family. In terms of assembly, homotrimer.

It localises to the cytoplasm. The enzyme catalyses (S)-2,3,4,5-tetrahydrodipicolinate + succinyl-CoA + H2O = (S)-2-succinylamino-6-oxoheptanedioate + CoA. Its pathway is amino-acid biosynthesis; L-lysine biosynthesis via DAP pathway; LL-2,6-diaminopimelate from (S)-tetrahydrodipicolinate (succinylase route): step 1/3. In Rhizobium meliloti (strain 1021) (Ensifer meliloti), this protein is 2,3,4,5-tetrahydropyridine-2,6-dicarboxylate N-succinyltransferase.